The chain runs to 718 residues: Putative aminodeoxychorismate synthase (718 aa).

One can recognise a Glutamine amidotransferase type-1 domain in the interval 9-203; that stretch reads QILLIDCYDS…LSLADTPNIQ (195 aa). The active-site Nucleophile is the C88. Catalysis depends on residues H177 and E179. Positions 266-718 are PABB component; the sequence is FLDSAKKPGR…NLKNKKRSCK (453 aa).

In the C-terminal section; belongs to the anthranilate synthase component I family.

It localises to the cytoplasm. The protein resides in the nucleus. It carries out the reaction chorismate + L-glutamine = 4-amino-4-deoxychorismate + L-glutamate. It participates in cofactor biosynthesis; tetrahydrofolate biosynthesis; 4-aminobenzoate from chorismate: step 1/2. Functionally, catalyzes the biosynthesis of 4-amino-4-deoxychorismate (ADC) from chorismate and glutamine. Required for the synthesis of 4-aminobenzoate (PABA), an important component in tetrahydrofolate biosynthesis. This Schizosaccharomyces pombe (strain 972 / ATCC 24843) (Fission yeast) protein is Putative aminodeoxychorismate synthase.